A 76-amino-acid chain; its full sequence is Large ribosomal subunit protein eL20 (76 aa).

The protein belongs to the eukaryotic ribosomal protein eL20 family. Part of the 50S ribosomal subunit. Binds 23S rRNA.

This Methanococcus maripaludis (strain C5 / ATCC BAA-1333) protein is Large ribosomal subunit protein eL20.